Here is a 116-residue protein sequence, read N- to C-terminus: Ribosome-binding factor A (116 aa).

The protein belongs to the RbfA family. In terms of assembly, monomer. Binds 30S ribosomal subunits, but not 50S ribosomal subunits or 70S ribosomes.

It is found in the cytoplasm. Its function is as follows. One of several proteins that assist in the late maturation steps of the functional core of the 30S ribosomal subunit. Associates with free 30S ribosomal subunits (but not with 30S subunits that are part of 70S ribosomes or polysomes). Required for efficient processing of 16S rRNA. May interact with the 5'-terminal helix region of 16S rRNA. The sequence is that of Ribosome-binding factor A from Mycoplasma pneumoniae (strain ATCC 29342 / M129 / Subtype 1) (Mycoplasmoides pneumoniae).